A 141-amino-acid chain; its full sequence is ATP synthase epsilon chain (141 aa).

It belongs to the ATPase epsilon chain family. As to quaternary structure, F-type ATPases have 2 components, CF(1) - the catalytic core - and CF(0) - the membrane proton channel. CF(1) has five subunits: alpha(3), beta(3), gamma(1), delta(1), epsilon(1). CF(0) has three main subunits: a, b and c.

It localises to the cell inner membrane. Its function is as follows. Produces ATP from ADP in the presence of a proton gradient across the membrane. This is ATP synthase epsilon chain from Gluconacetobacter diazotrophicus (strain ATCC 49037 / DSM 5601 / CCUG 37298 / CIP 103539 / LMG 7603 / PAl5).